The sequence spans 163 residues: Nucleotide-binding protein Acel_0286 (163 aa).

It belongs to the YajQ family.

In terms of biological role, nucleotide-binding protein. This Acidothermus cellulolyticus (strain ATCC 43068 / DSM 8971 / 11B) protein is Nucleotide-binding protein Acel_0286.